The chain runs to 930 residues: G patch domain-containing protein TGH (930 aa).

K25 is covalently cross-linked (Glycyl lysine isopeptide (Lys-Gly) (interchain with G-Cter in ubiquitin)). The segment at 76-152 is disordered; the sequence is GWAPQSFTSS…PSAIPGPVPD (77 aa). Residues 159-199 form the G-patch domain; the sequence is SESIGVKLLLKMGWRRGHSIKEVRASSDARREARKAFLAFY. Residues 405 to 447 form an SURP motif repeat; it reads LIEGFATFVSRCGKLYEDLSREKNQSNQLFDFLREGNGHDYYA. Disordered stretches follow at residues 478–508, 687–751, and 773–930; these read AETR…GSFQ, RQVS…NEAA, and FEVP…RRRD. Positions 489–498 are enriched in basic and acidic residues; sequence PLQRSLKETD. Residues 499–508 show a composition bias toward polar residues; the sequence is TSASSGGSFQ. Over residues 701 to 711 the composition is skewed to acidic residues; the sequence is IEEPEVEVEVE. A compositionally biased stretch (basic and acidic residues) spans 779–808; sequence EEIKSRSKPEDSSDKRLDRPGLKEKVEEKT. Basic residues predominate over residues 848 to 857; that stretch reads RRKRYNKKDR. Residues 858-877 show a composition bias toward basic and acidic residues; the sequence is HRNDSESDSSSDYHSRDKQG. The segment covering 892–908 has biased composition (basic residues); the sequence is RSSHKKHSKHRRTKKSS. Over residues 913 to 923 the composition is skewed to basic and acidic residues; the sequence is SSDEEQKESRR.

As to expression, expressed in vasculature of cotyledons and leaves, young meristematic tissues, trichomes and pistils.

Its subcellular location is the nucleus speckle. It is found in the nucleus. The protein localises to the nucleoplasm. Functions as a component of microRNA (miRNA) and small interfering RNA (siRNA) biogenesis. May assist DCL1 and DCL4 to efficiently process and/or recruit the precursors of miRNAs and siRNAs. In the miRNA biogenesis pathway, associates with the DCL1 complex that processes primary miRNAs (pri-miRNAs) into miRNAs. Binds pri-miRNAs and precursor miRNAs (pre-miRNAs). Is required for the interaction between pri-miRNAs and DRB1. Required for general proper plant growth and, in particular, initiation of vascular development. Interacts genetically with AMP1, a glutamate carboxypeptidase involved in the regulation of meristem function. This is G patch domain-containing protein TGH from Arabidopsis thaliana (Mouse-ear cress).